Here is a 137-residue protein sequence, read N- to C-terminus: Acidic phospholipase A2 beta-bungarotoxin A chain (137 aa).

A signal peptide spans 1–9 (AVCVSLLGA). The propeptide occupies 10–17 (ANIPPHPL). 6 disulfide bridges follow: Cys44/Cys136, Cys46/Cys62, Cys61/Cys117, Cys68/Cys110, Cys78/Cys103, and Cys96/Cys108. Ca(2+) is bound by residues Tyr45, Gly47, and Gly49. His65 is an active-site residue. Asp66 provides a ligand contact to Ca(2+). Asp111 is a catalytic residue.

It belongs to the phospholipase A2 family. Group I subfamily. D49 sub-subfamily. In terms of assembly, heterodimer; disulfide-linked. The A chain has phospholipase A2 activity and the B chain shows homology with the basic protease inhibitors. Requires Ca(2+) as cofactor. In terms of tissue distribution, expressed by the venom gland.

It localises to the secreted. The enzyme catalyses a 1,2-diacyl-sn-glycero-3-phosphocholine + H2O = a 1-acyl-sn-glycero-3-phosphocholine + a fatty acid + H(+). Functionally, beta bungarotoxin is a presynaptic neurotoxin. The A chain has phospholipase activity. PLA2 catalyzes the calcium-dependent hydrolysis of the 2-acyl groups in 3-sn-phosphoglycerides. The chain is Acidic phospholipase A2 beta-bungarotoxin A chain from Bungarus candidus (Malayan krait).